Consider the following 155-residue polypeptide: Ciliary microtubule inner protein 2C (155 aa).

Belongs to the CIMIP2 family.

It is found in the cytoplasm. The protein resides in the cytoskeleton. It localises to the cilium axoneme. Functionally, microtubule inner protein (MIP) part of the dynein-decorated doublet microtubules (DMTs) in cilia axoneme, which is required for motile cilia beating. In Xenopus laevis (African clawed frog), this protein is Ciliary microtubule inner protein 2C (cimip2cb).